A 438-amino-acid chain; its full sequence is Glutamyl-tRNA(Gln) amidotransferase subunit D (438 aa).

Residues 92 to 422 enclose the Asparaginase/glutaminase domain; that stretch reads PTITILGTGG…REAKKMMLTN (331 aa). Catalysis depends on residues Thr102, Thr178, Asp179, and Lys256.

Belongs to the asparaginase 1 family. GatD subfamily. Heterodimer of GatD and GatE.

It carries out the reaction L-glutamyl-tRNA(Gln) + L-glutamine + ATP + H2O = L-glutaminyl-tRNA(Gln) + L-glutamate + ADP + phosphate + H(+). In terms of biological role, allows the formation of correctly charged Gln-tRNA(Gln) through the transamidation of misacylated Glu-tRNA(Gln) in organisms which lack glutaminyl-tRNA synthetase. The reaction takes place in the presence of glutamine and ATP through an activated gamma-phospho-Glu-tRNA(Gln). The GatDE system is specific for glutamate and does not act on aspartate. The sequence is that of Glutamyl-tRNA(Gln) amidotransferase subunit D from Pyrococcus furiosus (strain ATCC 43587 / DSM 3638 / JCM 8422 / Vc1).